A 287-amino-acid polypeptide reads, in one-letter code: Ribosomal RNA small subunit methyltransferase A (287 aa).

Residues N28, L30, G55, E77, D103, and N123 each coordinate S-adenosyl-L-methionine.

The protein belongs to the class I-like SAM-binding methyltransferase superfamily. rRNA adenine N(6)-methyltransferase family. RsmA subfamily.

It is found in the cytoplasm. It catalyses the reaction adenosine(1518)/adenosine(1519) in 16S rRNA + 4 S-adenosyl-L-methionine = N(6)-dimethyladenosine(1518)/N(6)-dimethyladenosine(1519) in 16S rRNA + 4 S-adenosyl-L-homocysteine + 4 H(+). Functionally, specifically dimethylates two adjacent adenosines (A1518 and A1519) in the loop of a conserved hairpin near the 3'-end of 16S rRNA in the 30S particle. May play a critical role in biogenesis of 30S subunits. The chain is Ribosomal RNA small subunit methyltransferase A from Rhodopseudomonas palustris (strain TIE-1).